We begin with the raw amino-acid sequence, 500 residues long: Glutamate decarboxylase 3 (500 aa).

A Phosphoserine modification is found at Ser8. Lys277 carries the N6-(pyridoxal phosphate)lysine modification.

It belongs to the group II decarboxylase family. As to quaternary structure, homohexamer. Interacts with calmodulin. Pyridoxal 5'-phosphate is required as a cofactor. Expressed at low levels in siliques.

The catalysed reaction is L-glutamate + H(+) = 4-aminobutanoate + CO2. Its function is as follows. Catalyzes the production of GABA. The calmodulin-binding is calcium-dependent and it is proposed that this may, directly or indirectly, form a calcium regulated control of GABA biosynthesis. The protein is Glutamate decarboxylase 3 (GAD3) of Arabidopsis thaliana (Mouse-ear cress).